The sequence spans 127 residues: Probable 4-amino-4-deoxy-L-arabinose-phosphoundecaprenol flippase subunit ArnF (127 aa).

Residues 1-2 (MG) are Cytoplasmic-facing. A helical membrane pass occupies residues 3-23 (LLFALGSVVLVSAAQLLLKWA). Residues 24-47 (MIQLPDISQLPQFLSSLSQFPLPT) are Periplasmic-facing. A helical membrane pass occupies residues 48 to 68 (AALFLGLLAYALSMLCWLLAL). Over 69–76 (KRLPLSRA) the chain is Cytoplasmic. The chain crosses the membrane as a helical span at residues 77-97 (YPLLSLSYLLVWLAALWLPGL). Topologically, residues 98–102 (NEVFR) are periplasmic. A helical membrane pass occupies residues 103-123 (WGKLAGAGLIVSGLLLICWPA). Residues 124–127 (AKTR) lie on the Cytoplasmic side of the membrane.

Belongs to the ArnF family. In terms of assembly, heterodimer of ArnE and ArnF.

It localises to the cell inner membrane. It functions in the pathway bacterial outer membrane biogenesis; lipopolysaccharide biosynthesis. Translocates 4-amino-4-deoxy-L-arabinose-phosphoundecaprenol (alpha-L-Ara4N-phosphoundecaprenol) from the cytoplasmic to the periplasmic side of the inner membrane. The sequence is that of Probable 4-amino-4-deoxy-L-arabinose-phosphoundecaprenol flippase subunit ArnF from Erwinia tasmaniensis (strain DSM 17950 / CFBP 7177 / CIP 109463 / NCPPB 4357 / Et1/99).